Reading from the N-terminus, the 177-residue chain is ATP synthase subunit delta (177 aa).

This sequence belongs to the ATPase delta chain family. F-type ATPases have 2 components, F(1) - the catalytic core - and F(0) - the membrane proton channel. F(1) has five subunits: alpha(3), beta(3), gamma(1), delta(1), epsilon(1). F(0) has three main subunits: a(1), b(2) and c(10-14). The alpha and beta chains form an alternating ring which encloses part of the gamma chain. F(1) is attached to F(0) by a central stalk formed by the gamma and epsilon chains, while a peripheral stalk is formed by the delta and b chains.

It localises to the cell inner membrane. Its function is as follows. F(1)F(0) ATP synthase produces ATP from ADP in the presence of a proton or sodium gradient. F-type ATPases consist of two structural domains, F(1) containing the extramembraneous catalytic core and F(0) containing the membrane proton channel, linked together by a central stalk and a peripheral stalk. During catalysis, ATP synthesis in the catalytic domain of F(1) is coupled via a rotary mechanism of the central stalk subunits to proton translocation. In terms of biological role, this protein is part of the stalk that links CF(0) to CF(1). It either transmits conformational changes from CF(0) to CF(1) or is implicated in proton conduction. This chain is ATP synthase subunit delta, found in Janthinobacterium sp. (strain Marseille) (Minibacterium massiliensis).